A 348-amino-acid chain; its full sequence is Heat-inducible transcription repressor HrcA (348 aa).

Belongs to the HrcA family.

Its function is as follows. Negative regulator of class I heat shock genes (grpE-dnaK-dnaJ and groELS operons). Prevents heat-shock induction of these operons. The chain is Heat-inducible transcription repressor HrcA from Chlorobium chlorochromatii (strain CaD3).